We begin with the raw amino-acid sequence, 636 residues long: tRNA 5-methylaminomethyl-2-thiouridine biosynthesis bifunctional protein MnmC (636 aa).

The tRNA (mnm(5)s(2)U34)-methyltransferase stretch occupies residues 1-202; the sequence is MTVSKILKQV…ERAALRAQSH (202 aa). Positions 227-636 are FAD-dependent cmnm(5)s(2)U34 oxidoreductase; that stretch reads IGGGVASACL…GKALEMSGKS (410 aa).

This sequence in the N-terminal section; belongs to the methyltransferase superfamily. tRNA (mnm(5)s(2)U34)-methyltransferase family. It in the C-terminal section; belongs to the DAO family. Requires FAD as cofactor.

The protein resides in the cytoplasm. It catalyses the reaction 5-aminomethyl-2-thiouridine(34) in tRNA + S-adenosyl-L-methionine = 5-methylaminomethyl-2-thiouridine(34) in tRNA + S-adenosyl-L-homocysteine + H(+). Catalyzes the last two steps in the biosynthesis of 5-methylaminomethyl-2-thiouridine (mnm(5)s(2)U) at the wobble position (U34) in tRNA. Catalyzes the FAD-dependent demodification of cmnm(5)s(2)U34 to nm(5)s(2)U34, followed by the transfer of a methyl group from S-adenosyl-L-methionine to nm(5)s(2)U34, to form mnm(5)s(2)U34. This is tRNA 5-methylaminomethyl-2-thiouridine biosynthesis bifunctional protein MnmC from Shewanella halifaxensis (strain HAW-EB4).